A 459-amino-acid polypeptide reads, in one-letter code: Peptidyl-prolyl cis-trans isomerase FKBP4 (459 aa).

M1 carries the post-translational modification N-acetylmethionine; in peptidyl-prolyl cis-trans isomerase FKBP4; alternate. The segment at 1-22 (MTAEETKAAESGAQSAPLRLEG) is disordered. Residue T2 is modified to N-acetylthreonine; in peptidyl-prolyl cis-trans isomerase FKBP4, N-terminally processed; partial. The PPIase FKBP-type 1 domain maps to 50–138 (GDRVFVHYTG…VFEVELFEFK (89 aa)). Residue T143 is modified to Phosphothreonine. The 87-residue stretch at 167 to 253 (GALVEVALEG…KYEIHLKSFE (87 aa)) folds into the PPIase FKBP-type 2 domain. Residue Y220 is modified to Phosphotyrosine. The tract at residues 267-400 (LEQSTIVKER…AQLVVCQQRI (134 aa)) is interaction with tubulin. 3 TPR repeats span residues 270–303 (STIV…LEYE), 319–352 (LASH…DSNN), and 354–386 (KGLF…YPSN). The residue at position 282 (K282) is an N6-acetyllysine. An Omega-N-methylarginine modification is found at R373. The interval 423–459 (TKAKATVAAGDQPADAEMRDEPKNDVAGGQPQVEAEA) is disordered.

In terms of assembly, homodimer. Interacts with GLMN. Associates with HSP90AA1 and HSP70 in steroid hormone receptor complexes. Also interacts with peroxisomal phytanoyl-CoA alpha-hydroxylase (PHYH). Interacts with NR3C1 and dynein. Interacts with HSF1 in the HSP90 complex. Associates with tubulin. Interacts with MAPT/TAU. Interacts (via TPR domain) with S100A1, S100A2 and S100A6; the interaction is Ca(2+) dependent. Interaction with S100A1 and S100A2 (but not with S100A6) leads to inhibition of FKBP4-HSP90 interaction. Interacts with dynein; causes partially NR3C1 transport to the nucleus.

It localises to the cytoplasm. The protein localises to the cytosol. The protein resides in the mitochondrion. Its subcellular location is the nucleus. It is found in the cytoskeleton. It carries out the reaction [protein]-peptidylproline (omega=180) = [protein]-peptidylproline (omega=0). With respect to regulation, inhibited by FK506. Its function is as follows. Immunophilin protein with PPIase and co-chaperone activities. Component of unligated steroid receptors heterocomplexes through interaction with heat-shock protein 90 (HSP90). May play a role in the intracellular trafficking of heterooligomeric forms of steroid hormone receptors between cytoplasm and nuclear compartments. The isomerase activity controls neuronal growth cones via regulation of TRPC1 channel opening. Also acts as a regulator of microtubule dynamics by inhibiting MAPT/TAU ability to promote microtubule assembly. May have a protective role against oxidative stress in mitochondria. The protein is Peptidyl-prolyl cis-trans isomerase FKBP4 (FKBP4) of Bos taurus (Bovine).